We begin with the raw amino-acid sequence, 128 residues long: Putative lipid-binding protein At4g00165 (128 aa).

The N-terminal stretch at 1–23 (MGISKALRSLLILLLLNITFFFG) is a signal peptide. Disulfide bonds link C34–C90, C46–C76, C56–C75, and C92–C128.

Belongs to the plant LTP family. PEARLI1 subfamily.

The protein localises to the secreted. This Arabidopsis thaliana (Mouse-ear cress) protein is Putative lipid-binding protein At4g00165.